Consider the following 366-residue polypeptide: Tudor domain-containing protein 10 (366 aa).

Positions 34-107 (TEVYVGNLPL…RKLFVNTSKR (74 aa)) constitute an RRM domain. A Tudor domain is found at 210-317 (FWAMHVTEAL…PLTQPFMLEK (108 aa)). Residues 216-237 (TEALHQNMQALFSTLAQAEEQQ) are a coiled coil.

This is Tudor domain-containing protein 10 (TDRD10) from Homo sapiens (Human).